The chain runs to 303 residues: Sulfate adenylyltransferase subunit 2 (303 aa).

The protein belongs to the PAPS reductase family. CysD subfamily. In terms of assembly, heterodimer composed of CysD, the smaller subunit, and CysN.

It carries out the reaction sulfate + ATP + H(+) = adenosine 5'-phosphosulfate + diphosphate. It participates in sulfur metabolism; hydrogen sulfide biosynthesis; sulfite from sulfate: step 1/3. Functionally, with CysN forms the ATP sulfurylase (ATPS) that catalyzes the adenylation of sulfate producing adenosine 5'-phosphosulfate (APS) and diphosphate, the first enzymatic step in sulfur assimilation pathway. APS synthesis involves the formation of a high-energy phosphoric-sulfuric acid anhydride bond driven by GTP hydrolysis by CysN coupled to ATP hydrolysis by CysD. The polypeptide is Sulfate adenylyltransferase subunit 2 (Sulfurovum sp. (strain NBC37-1)).